We begin with the raw amino-acid sequence, 433 residues long: D-amino acid dehydrogenase (433 aa).

Residue 3–17 (VLVLGSGVIGTTSAY) coordinates FAD.

Belongs to the DadA oxidoreductase family. FAD serves as cofactor.

The enzyme catalyses a D-alpha-amino acid + A + H2O = a 2-oxocarboxylate + AH2 + NH4(+). It participates in amino-acid degradation; D-alanine degradation; NH(3) and pyruvate from D-alanine: step 1/1. In terms of biological role, oxidative deamination of D-amino acids. The sequence is that of D-amino acid dehydrogenase from Pseudomonas savastanoi pv. phaseolicola (strain 1448A / Race 6) (Pseudomonas syringae pv. phaseolicola (strain 1448A / Race 6)).